Reading from the N-terminus, the 306-residue chain is B- and T-lymphocyte attenuator (306 aa).

Positions 1–29 (MKTVPAMLGTPRLFREFFILHLGLWSILC) are cleaved as a signal peptide. Residues 30-183 (EKATKRNDEE…ERPGRTWLLY (154 aa)) lie on the Extracellular side of the membrane. Residues 37-139 (DEECPVQLTI…SQVINSHSVT (103 aa)) enclose the Ig-like V-type domain. 3 disulfides stabilise this stretch: Cys-40-Cys-69, Cys-64-Cys-124, and Cys-78-Cys-85. N-linked (GlcNAc...) asparagine glycosylation is found at Asn-74, Asn-81, Asn-101, Asn-119, Asn-148, and Asn-165. The chain crosses the membrane as a helical span at residues 184-204 (TLLPLGALLLLLACVCLLCFL). The Cytoplasmic portion of the chain corresponds to 205–306 (KRIQGKEKKP…TEYASICVRS (102 aa)).

Interacts with tyrosine phosphatases PTPN6/SHP-1 and PTPN11/SHP-2. Interacts with TNFRSF14/HVEM (via cysteine-rich domain 1). In terms of processing, phosphorylated on Tyr residues by TNFRSF14 and by antigen receptors cross-linking, both inducing association with PTPN6 and PTPN11. Post-translationally, N-glycosylated. Expressed in splenic T- and B-cells as well as lymph node tissues but very weakly in somatic tissues. Also expressed in macrophages, NK cells and dendritic cells. A polymorphic tissue distribution between several strains is seen.

Its subcellular location is the cell membrane. In terms of biological role, inhibitory receptor on lymphocytes that negatively regulates antigen receptor signaling via PTPN6/SHP-1 and PTPN11/SHP-2. May interact in cis (on the same cell) or in trans (on other cells) with TNFRSF14. In cis interactions, appears to play an immune regulatory role inhibiting in trans interactions in naive T cells to maintain a resting state. In trans interactions, can predominate during adaptive immune response to provide survival signals to effector T cells. In Mus musculus (Mouse), this protein is B- and T-lymphocyte attenuator.